Reading from the N-terminus, the 344-residue chain is Golgi-associated RAB2 interactor protein 1B (344 aa).

Positions 271–293 are disordered; that stretch reads FRSSRKVETNKNSSGKDSSREDS.

It belongs to the GARIN family.

Its subcellular location is the golgi apparatus. Its function is as follows. RAB2B effector protein required for accurate acrosome formation and normal male fertility. In complex with RAB2A/RAB2B, seems to suppress excessive vesicle trafficking during acrosome formation. The protein is Golgi-associated RAB2 interactor protein 1B of Homo sapiens (Human).